The primary structure comprises 1399 residues: DNA-directed RNA polymerase subunit beta' (1399 aa).

The Zn(2+) site is built by cysteine 71, cysteine 73, cysteine 86, and cysteine 89. The Mg(2+) site is built by aspartate 462, aspartate 464, and aspartate 466. Residues cysteine 810, cysteine 884, cysteine 891, and cysteine 894 each contribute to the Zn(2+) site. Residues 1379–1399 (KQAAIVPSQPEPQPLALPPAE) form a disordered region. Positions 1387–1399 (QPEPQPLALPPAE) are enriched in pro residues.

The protein belongs to the RNA polymerase beta' chain family. The RNAP catalytic core consists of 2 alpha, 1 beta, 1 beta' and 1 omega subunit. When a sigma factor is associated with the core the holoenzyme is formed, which can initiate transcription. The cofactor is Mg(2+). Zn(2+) serves as cofactor.

It catalyses the reaction RNA(n) + a ribonucleoside 5'-triphosphate = RNA(n+1) + diphosphate. In terms of biological role, DNA-dependent RNA polymerase catalyzes the transcription of DNA into RNA using the four ribonucleoside triphosphates as substrates. The polypeptide is DNA-directed RNA polymerase subunit beta' (Bradyrhizobium sp. (strain ORS 278)).